The following is a 238-amino-acid chain: Small ribosomal subunit protein uS3 (238 aa).

The KH type-2 domain occupies 39–107 (MREFIHDYAK…ELHLNIVEIR (69 aa)). Residues 212–222 (PQAHDRRHSEA) show a composition bias toward basic and acidic residues. Residues 212–238 (PQAHDRRHSEAQEGAAPRPPRRDRERA) are disordered.

This sequence belongs to the universal ribosomal protein uS3 family. Part of the 30S ribosomal subunit. Forms a tight complex with proteins S10 and S14.

In terms of biological role, binds the lower part of the 30S subunit head. Binds mRNA in the 70S ribosome, positioning it for translation. The sequence is that of Small ribosomal subunit protein uS3 from Cereibacter sphaeroides (strain ATCC 17029 / ATH 2.4.9) (Rhodobacter sphaeroides).